The following is an 89-amino-acid chain: Co-chaperonin GroES (89 aa).

It belongs to the GroES chaperonin family. As to quaternary structure, heptamer of 7 subunits arranged in a ring. Interacts with the chaperonin GroEL.

It localises to the cytoplasm. Its function is as follows. Together with the chaperonin GroEL, plays an essential role in assisting protein folding. The GroEL-GroES system forms a nano-cage that allows encapsulation of the non-native substrate proteins and provides a physical environment optimized to promote and accelerate protein folding. GroES binds to the apical surface of the GroEL ring, thereby capping the opening of the GroEL channel. The chain is Co-chaperonin GroES from Parabacteroides distasonis (strain ATCC 8503 / DSM 20701 / CIP 104284 / JCM 5825 / NCTC 11152).